Here is a 260-residue protein sequence, read N- to C-terminus: Methyl-coenzyme M reductase subunit gamma (260 aa).

Arg-123 is a binding site for coenzyme M.

The protein belongs to the methyl-coenzyme M reductase gamma subunit family. MCR is a hexamer of two alpha, two beta, and two gamma chains, forming a dimer of heterotrimers. Coenzyme F430 is required as a cofactor.

It is found in the cytoplasm. It catalyses the reaction coenzyme B + methyl-coenzyme M = methane + coenzyme M-coenzyme B heterodisulfide. Its pathway is one-carbon metabolism; methyl-coenzyme M reduction; methane from methyl-coenzyme M: step 1/1. Functionally, component of the methyl-coenzyme M reductase (MCR) I that catalyzes the reductive cleavage of methyl-coenzyme M (CoM-S-CH3 or 2-(methylthio)ethanesulfonate) using coenzyme B (CoB or 7-mercaptoheptanoylthreonine phosphate) as reductant which results in the production of methane and the mixed heterodisulfide of CoB and CoM (CoM-S-S-CoB). This is the final step in methanogenesis. This Methanococcus vannielii protein is Methyl-coenzyme M reductase subunit gamma (mcrG).